We begin with the raw amino-acid sequence, 329 residues long: Terpene synthase 7 (329 aa).

The short motif at D99–E104 is the DDxx(x)D/E motif element. Residues N230–E238 carry the NDxxSxxxD/E motif motif.

It belongs to the terpene synthase family.

Functionally, terpene synthase that converts its substrate farnesyl diphosphate (FPP) into 6 yet unidentified sesquiterpenes. The chain is Terpene synthase 7 from Dictyostelium purpureum (Slime mold).